Here is a 327-residue protein sequence, read N- to C-terminus: Flotillin-like protein FloA (327 aa).

Transmembrane regions (helical) follow at residues 6 to 26 (VLFF…FTFV) and 28 to 48 (IMLW…TLVG).

The protein belongs to the flotillin-like FloA family. Homooligomerizes.

It is found in the cell membrane. Its subcellular location is the membrane raft. Its function is as follows. Found in functional membrane microdomains (FMM) that may be equivalent to eukaryotic membrane rafts. FMMs are highly dynamic and increase in number as cells age. Flotillins are thought to be important factors in membrane fluidity. This is Flotillin-like protein FloA from Priestia megaterium (strain DSM 319 / IMG 1521) (Bacillus megaterium).